Here is a 322-residue protein sequence, read N- to C-terminus: Phthalate dioxygenase reductase (322 aa).

Residues 7-109 (DGFLRLKIAS…SLPRNEFPLD (103 aa)) form the FAD-binding FR-type domain. FMN-binding positions include 56 to 57 (RT), 73 to 75 (AVK), 81 to 84 (RGGS), Thr125, and Phe226. In terms of domain architecture, 2Fe-2S ferredoxin-type spans 239–322 (FTVRLSRSGT…AKSAELVLDL (84 aa)). Position 273 (Cys273) interacts with [2Fe-2S] cluster. Ser275 serves as a coordination point for FMN. [2Fe-2S] cluster-binding residues include Cys278, Cys281, and Cys309.

Belongs to the PDR/VanB family. Monomer. FMN is required as a cofactor.

In terms of biological role, component of the electron transfer chain involved in pyridine nucleotide-dependent dihydroxylation of phthalate. Utilizes FMN to mediate electron transfer from the two-electron donor, NADH, to the one-electron acceptor, (2Fe-2S). The protein is Phthalate dioxygenase reductase (ophA1) of Burkholderia cepacia (Pseudomonas cepacia).